A 227-amino-acid polypeptide reads, in one-letter code: Pre-hexon-linking protein VIII (227 aa).

Phosphothreonine; by host is present on threonine 64. The propeptide occupies 112–157 (FRHRVRSPGQGITHLKIRGRGIQLNDESVSSSLGLRPDGTFQIGGA). A phosphoserine; by host mark is found at serine 118 and serine 174.

It belongs to the adenoviridae hexon-linking protein family. In terms of assembly, interacts with the peripentonal hexons as well as the hexons in the facets. Part of a complex composed of the core-capsid bridging protein, the endosome lysis protein VI and the hexon-linking protein VIII; these interactions bridge the virus core to the capsid. Cleaved by the viral protease during virion maturation. May cause the middle segment to be shed from the capsid.

Its subcellular location is the virion. It localises to the host nucleus. Its function is as follows. Structural component of the virion that acts as a cement protein on the capsid interior and which glue the peripentonal hexons and group-of-nine hexons together. This is Pre-hexon-linking protein VIII from Homo sapiens (Human).